A 221-amino-acid chain; its full sequence is Glutathione peroxidase (221 aa).

The signal sequence occupies residues 1–19 (MFIQLLILSYAILLQLIAT). N28 is a glycosylation site (N-linked (GlcNAc...) asparagine). C72 is an active-site residue. 2 N-linked (GlcNAc...) asparagine glycosylation sites follow: N87 and N90.

It belongs to the glutathione peroxidase family. Homotetramer.

Its subcellular location is the secreted. The protein localises to the extracellular space. The catalysed reaction is 2 glutathione + H2O2 = glutathione disulfide + 2 H2O. This is Glutathione peroxidase from Dirofilaria immitis (Canine heartworm).